The primary structure comprises 563 residues: Nicalin (563 aa).

A signal peptide spans 1 to 29 (MQDEIIDFFRSPALLFYMTLMLTICVVNG). At 30-522 (SQQVGEVVET…NRLVAERVKP (493 aa)) the chain is on the lumenal side. N-linked (GlcNAc...) asparagine glycosylation is present at asparagine 232. A helical transmembrane segment spans residues 523–543 (AVFELVIAAGVFTYLSAFYYI). At 544 to 563 (ATHSQNTIEGTVAAIRKSIF) the chain is on the cytoplasmic side.

Belongs to the nicastrin family. As to quaternary structure, may interact with the levamisole-sensitive nicotinic acetylcholine receptor (L-AChR). May interact with nra-4 in the ER. As to expression, expressed in body wall, pharyngeal, and vulval muscles, excretory canal cell, head and motor neurons, and vulval epithelium.

It localises to the endoplasmic reticulum membrane. Its function is as follows. Involved in the recognition and selection of protein complexes to exit the endoplasmic reticulum (ER). In muscles, regulates levamisole-sensitive nicotinic acetylcholine receptor (L-AChR) subunit composition, possibly by allowing only specific L-AChR subunit combinations to exit the ER. Specifically, may promote the inclusion of alpha subunits unc-38 and unc-29 into L-AChR. Regulates L-AChR sensitivity to agonists such as nicotine and levamisole at neuro-muscular junctions. In touch neurons, may prevent ER exit of incorrectly folded mec-4-mec-10 ion channel. The polypeptide is Nicalin (Caenorhabditis elegans).